The following is a 199-amino-acid chain: N-(5'-phosphoribosyl)anthranilate isomerase (199 aa).

It belongs to the TrpF family.

It carries out the reaction N-(5-phospho-beta-D-ribosyl)anthranilate = 1-(2-carboxyphenylamino)-1-deoxy-D-ribulose 5-phosphate. Its pathway is amino-acid biosynthesis; L-tryptophan biosynthesis; L-tryptophan from chorismate: step 3/5. This Campylobacter jejuni subsp. jejuni serotype O:6 (strain 81116 / NCTC 11828) protein is N-(5'-phosphoribosyl)anthranilate isomerase.